A 282-amino-acid polypeptide reads, in one-letter code: HMG box-containing protein R545 (282 aa).

Residues 1–282 are disordered; that stretch reads MPKKTATKAN…KKEASDEESD (282 aa). Residues 16–29 show a composition bias toward acidic residues; the sequence is DSENDSVVSEEEDN. A compositionally biased stretch (basic residues) spans 70–87; it reads KGKVNAKKAPAKKAPVKK. Over residues 93–121 the composition is skewed to acidic residues; that stretch reads DSDNEEDEASEDGSDDEEDVVSADDSDSD. A compositionally biased stretch (basic residues) spans 127 to 153; sequence KAAKKAPAKKAPAKKAPAKKAPAKKGK. 2 stretches are compositionally biased toward basic and acidic residues: residues 176–187 and 197–214; these read TKKDGDKPKKPL and RMPE…KEYM. The HMG box DNA-binding region spans 183 to 252; the sequence is PKKPLSDYQK…KAPAKGGSKS (70 aa). The span at 253–273 shows a compositional bias: basic residues; that stretch reads TAKKAPAKKAPAKKAPAKKSK.

In Acanthamoeba polyphaga mimivirus (APMV), this protein is HMG box-containing protein R545.